The sequence spans 96 residues: UPF0213 protein BCE33L0031 (96 aa).

The region spanning 4 to 79 is the GIY-YIG domain; it reads NKHCFYVVEC…KQLNRKQKEE (76 aa).

The protein belongs to the UPF0213 family.

The sequence is that of UPF0213 protein BCE33L0031 from Bacillus cereus (strain ZK / E33L).